Reading from the N-terminus, the 276-residue chain is MALSVNTNQPALIALQNLNRTNDDMQAVQTRINTGEAISTAKDTAAVWSHRPGAGDMSGLAREDEPGSGDIDRGRGPRAGESVSDLLKLMREKVVAAKDTSLTTTSRQALNADFQGLIKNLNQVLRSATFDGANLLDGSQAADMSFLADADAGQAITLTLQNLSLGGTINTLTATDDILDPVNAAGVLTRLDATLSAVNQAVGNIGTQAKQIDAHNTFVAKLNDVLETGVGNLVDADLAKESARLQALQVKQPLGAQALSIANGAPQIILSLFKGG.

A disordered region spans residues 51 to 80; that stretch reads RPGAGDMSGLAREDEPGSGDIDRGRGPRAG. Positions 61-75 are enriched in basic and acidic residues; that stretch reads AREDEPGSGDIDRGR.

Belongs to the bacterial flagellin family. In terms of assembly, in C.crescentus, the flagellar filament is composed of multiple flagellins of 29 kDa; 27 kDa and 25 kDa.

The protein resides in the secreted. Its subcellular location is the bacterial flagellum. Flagellin is the subunit protein which polymerizes to form the filaments of bacterial flagella. The protein is Flagellin FljJ (fljJ) of Caulobacter vibrioides (strain ATCC 19089 / CIP 103742 / CB 15) (Caulobacter crescentus).